Consider the following 1217-residue polypeptide: DNA-directed RNA polymerase subunit beta' (1217 aa).

Zn(2+) is bound by residues cysteine 60, cysteine 62, cysteine 75, and cysteine 78. Mg(2+) is bound by residues aspartate 449, aspartate 451, and aspartate 453. The Zn(2+) site is built by cysteine 821, cysteine 895, cysteine 902, and cysteine 905.

The protein belongs to the RNA polymerase beta' chain family. In terms of assembly, the RNAP catalytic core consists of 2 alpha, 1 beta, 1 beta' and 1 omega subunit. When a sigma factor is associated with the core the holoenzyme is formed, which can initiate transcription. The cofactor is Mg(2+). Zn(2+) is required as a cofactor.

The catalysed reaction is RNA(n) + a ribonucleoside 5'-triphosphate = RNA(n+1) + diphosphate. In terms of biological role, DNA-dependent RNA polymerase catalyzes the transcription of DNA into RNA using the four ribonucleoside triphosphates as substrates. In Lactobacillus acidophilus (strain ATCC 700396 / NCK56 / N2 / NCFM), this protein is DNA-directed RNA polymerase subunit beta'.